The following is a 182-amino-acid chain: Keratin, high-sulfur matrix protein, B2D (182 aa).

6 repeat units span residues 27–36 (PTCCQTSCCQ), 37–46 (PTSIQTSCCQ), 47–56 (PTSIQTSCCQ), 57–66 (PTSIQTSCCQ), 67–76 (PISIQTSCCQ), and 77–86 (PTCLQTSGCE). The tract at residues 27–86 (PTCCQTSCCQPTSIQTSCCQPTSIQTSCCQPTSIQTSCCQPISIQTSCCQPTCLQTSGCE) is 6 X 10 AA tandem repeats.

In terms of biological role, the keratin products of mammalian epidermal derivatives such as wool and hair consist of microfibrils embedded in a rigid matrix of other proteins. The matrix proteins include the high-sulfur and high-tyrosine keratins, having molecular weights of 6-20 kDa, whereas the microfibrils contain the larger, low-sulfur keratins (40-56 kDa). The protein is Keratin, high-sulfur matrix protein, B2D of Ovis aries (Sheep).